A 411-amino-acid polypeptide reads, in one-letter code: ATP-dependent Clp protease ATP-binding subunit ClpX (411 aa).

Residues 1-51 (MAKKKDEEYCSFCGMPRTQVNLMLEGVHAHICDECALRAGEVVREALQKFK) form the ClpX-type ZB domain. Residues Cys-10, Cys-13, Cys-32, and Cys-35 each contribute to the Zn(2+) site. 119-126 (PTGTGKTL) provides a ligand contact to ATP.

It belongs to the ClpX chaperone family. Component of the ClpX-ClpP complex. Forms a hexameric ring that, in the presence of ATP, binds to fourteen ClpP subunits assembled into a disk-like structure with a central cavity, resembling the structure of eukaryotic proteasomes.

ATP-dependent specificity component of the Clp protease. It directs the protease to specific substrates. Can perform chaperone functions in the absence of ClpP. This chain is ATP-dependent Clp protease ATP-binding subunit ClpX, found in Porphyromonas gingivalis (strain ATCC 33277 / DSM 20709 / CIP 103683 / JCM 12257 / NCTC 11834 / 2561).